We begin with the raw amino-acid sequence, 275 residues long: HUWE1-associated protein modifying stress responses 1 (275 aa).

Acidic residues predominate over residues 32-44 (AEQDEQLPPELQE). The disordered stretch occupies residues 32 to 51 (AEQDEQLPPELQEEAAAAAQ). Positions 80–152 (QQPGLSLWVP…LISFLCGKVP (73 aa)) are HUWE1-binding and HAPSTR1 oligomerization (HBO) domain. Disordered stretches follow at residues 155-181 (RNSR…SSVE), 204-227 (SVRS…RRRN), and 250-275 (GTRK…NRMI). Ser167 carries the post-translational modification Phosphoserine. The span at 172-181 (TSTETSSSVE) shows a compositional bias: low complexity. The span at 204-216 (SVRSSTPGSPTHV) shows a compositional bias: polar residues. Residue Ser212 is modified to Phosphoserine.

It belongs to the HAPSTR1 family. In terms of assembly, homooligomer. Heterooligomer with HAPSTR2; the interaction is direct and stabilizes HAPSTR1. Interacts with HUWE1. Post-translationally, ubiquitinated by HUWE1. Promotes HAPSTR1 degradation through polyubiquitination.

The protein resides in the nucleus. It is found in the cytoplasm. Functionally, acts as a central player within a network of stress response pathways promoting cellular adaptability. The E3 ligase HUWE1 assists HAPSTR1 in controlling stress signaling and in turn, HUWE1 feeds back to promote the degradation of HAPSTR1. HAPSTR1 represents a central coordination mechanism for stress response programs. Functions as a negative regulator of TP53/P53 in the cellular response to telomere erosion and probably also DNA damage. May attenuate p53/TP53 activation through the E3 ubiquitin ligase HUWE1. The chain is HUWE1-associated protein modifying stress responses 1 from Homo sapiens (Human).